The primary structure comprises 206 residues: High frequency lysogenization protein HflD homolog (206 aa).

Belongs to the HflD family.

The protein resides in the cytoplasm. It is found in the cell inner membrane. This is High frequency lysogenization protein HflD homolog from Pseudomonas paraeruginosa (strain DSM 24068 / PA7) (Pseudomonas aeruginosa (strain PA7)).